The primary structure comprises 227 residues: ATP synthase subunit a (227 aa).

A run of 6 helical transmembrane segments spans residues 14–34 (LLNI…FVSF), 69–89 (WVVL…IGLF), 98–118 (QLSM…VYGF), 137–157 (LLVP…PLAL), 169–189 (HLLM…SVML), and 205–223 (IAVA…TLYL).

The protein belongs to the ATPase A chain family. As to quaternary structure, F-type ATPases have 2 components, CF(1) - the catalytic core - and CF(0) - the membrane proton channel. CF(1) has five subunits: alpha(3), beta(3), gamma(1), delta(1), epsilon(1). CF(0) has three main subunits: a, b and c.

Its subcellular location is the mitochondrion inner membrane. Functionally, mitochondrial membrane ATP synthase (F(1)F(0) ATP synthase or Complex V) produces ATP from ADP in the presence of a proton gradient across the membrane which is generated by electron transport complexes of the respiratory chain. F-type ATPases consist of two structural domains, F(1) - containing the extramembraneous catalytic core and F(0) - containing the membrane proton channel, linked together by a central stalk and a peripheral stalk. During catalysis, ATP synthesis in the catalytic domain of F(1) is coupled via a rotary mechanism of the central stalk subunits to proton translocation. Key component of the proton channel; it may play a direct role in the translocation of protons across the membrane. In Branchiostoma floridae (Florida lancelet), this protein is ATP synthase subunit a (ATP6).